The following is a 65-amino-acid chain: Bacteriocin amylovorin-L (65 aa).

Residues 1–15 (MKQLNSEQLQNIIGG) constitute a propeptide that is removed on maturation. A helical transmembrane segment spans residues 39 to 59 (LGGVWGAVIGGVGGAAVCGLA).

Active lactobin is composed of two different peptides, one which is lactobin A.

Its subcellular location is the secreted. The protein resides in the host cell membrane. This heat stable bacteriocin inhibits the growth of closely related Lactobacillus species. It may act as a pore-forming protein, creating a channel in the cell membrane. It kills Lactobacillus helveticus ATCC 15009, but displays no activity towards Listeria species. This Lactobacillus amylovorus protein is Bacteriocin amylovorin-L (amyL).